The primary structure comprises 1061 residues: Transcription termination factor 2 (1061 aa).

Disordered regions lie at residues 1–163 (MSSE…TAEA) and 212–253 (ILSS…VKTS). Residues 32-46 (LSKSSRLSKSSRPSS) are compositionally biased toward low complexity. Phosphoserine occurs at positions 108 and 110. The span at 138 to 152 (LSDDDSEIEYSDEVQ) shows a compositional bias: acidic residues. Ser-214 and Ser-215 each carry phosphoserine. Thr-216 bears the Phosphothreonine mark. Polar residues predominate over residues 237–253 (KSLSPRSSAGASVVKTS). The region spanning 452 to 652 (WRERKLPRGG…YALLKFLRCS (201 aa)) is the Helicase ATP-binding domain. Position 465-472 (465-472 (DDMGLGKT)) interacts with ATP. Residues 485–523 (GQEMSEGKDESSDSDSEDDKNKKRKSVTGWKSKGRKDTR) form a disordered region. Residues 506 to 522 (KKRKSVTGWKSKGRKDT) are compositionally biased toward basic residues. The DEAH box signature appears at 603–606 (DEAH). Residues 891–1056 (KINMVIQILK…SSKLTIDDLK (166 aa)) form the Helicase C-terminal domain.

The protein belongs to the SNF2/RAD54 helicase family.

It localises to the nucleus. DsDNA-dependent ATPase which acts as a transcription termination factor by coupling ATP hydrolysis with removal of RNA polymerase II from the DNA template. In Drosophila melanogaster (Fruit fly), this protein is Transcription termination factor 2 (lds).